Reading from the N-terminus, the 806-residue chain is Leucine--tRNA ligase (806 aa).

The short motif at 40–51 is the 'HIGH' region element; the sequence is PYPSGQGLHVGH. Positions 578–582 match the 'KMSKS' region motif; sequence KMSKS. K581 serves as a coordination point for ATP.

The protein belongs to the class-I aminoacyl-tRNA synthetase family.

It is found in the cytoplasm. It carries out the reaction tRNA(Leu) + L-leucine + ATP = L-leucyl-tRNA(Leu) + AMP + diphosphate. The polypeptide is Leucine--tRNA ligase (Limosilactobacillus reuteri (strain DSM 20016) (Lactobacillus reuteri)).